The sequence spans 79 residues: Sec-independent protein translocase protein TatA (79 aa).

A helical membrane pass occupies residues M1 to G21. A compositionally biased stretch (basic and acidic residues) spans G42–D60. Positions G42 to V79 are disordered. Positions H61–N70 are enriched in polar residues.

It belongs to the TatA/E family. In terms of assembly, the Tat system comprises two distinct complexes: a TatABC complex, containing multiple copies of TatA, TatB and TatC subunits, and a separate TatA complex, containing only TatA subunits. Substrates initially bind to the TatABC complex, which probably triggers association of the separate TatA complex to form the active translocon.

The protein resides in the cell inner membrane. Part of the twin-arginine translocation (Tat) system that transports large folded proteins containing a characteristic twin-arginine motif in their signal peptide across membranes. TatA could form the protein-conducting channel of the Tat system. This chain is Sec-independent protein translocase protein TatA, found in Rhodopseudomonas palustris (strain HaA2).